Here is a 152-residue protein sequence, read N- to C-terminus: MSENILIVHENKKARFDYTIVETYEAGLQLMGSEVKSLRNKDVQLKDSYISFKGDEAYLQNAHIAEYKASSYNNHVPERHRKLLMHRNELDEIFEALREKGYSCVPLKIYFKNGRAKLQIALVKGKKTHDKREAIKKRDVSDQIRSSLRRSR.

Basic and acidic residues predominate over residues 132–142; that stretch reads REAIKKRDVSD. The interval 132-152 is disordered; sequence REAIKKRDVSDQIRSSLRRSR.

The protein belongs to the SmpB family.

Its subcellular location is the cytoplasm. Required for rescue of stalled ribosomes mediated by trans-translation. Binds to transfer-messenger RNA (tmRNA), required for stable association of tmRNA with ribosomes. tmRNA and SmpB together mimic tRNA shape, replacing the anticodon stem-loop with SmpB. tmRNA is encoded by the ssrA gene; the 2 termini fold to resemble tRNA(Ala) and it encodes a 'tag peptide', a short internal open reading frame. During trans-translation Ala-aminoacylated tmRNA acts like a tRNA, entering the A-site of stalled ribosomes, displacing the stalled mRNA. The ribosome then switches to translate the ORF on the tmRNA; the nascent peptide is terminated with the 'tag peptide' encoded by the tmRNA and targeted for degradation. The ribosome is freed to recommence translation, which seems to be the essential function of trans-translation. The sequence is that of SsrA-binding protein from Bdellovibrio bacteriovorus (strain ATCC 15356 / DSM 50701 / NCIMB 9529 / HD100).